The sequence spans 211 residues: MFISFEGIDASGKSTVMDLFAKYLKIKFPEKDIVTTFEPGGKNLKEALLIREFLLSKNNQISPYVEMLLFATARRIHLERLIWPALKAGKIVLCDRYIDSSIAYQGFGNGLDIDLVTSLNSLISENTFPDLTIFLDIKISKSFERMGIFRDHNRDRLENKGVEFYERVINGYEFLTKKNKNFFKIDGNGTYDEVLDLIIDFFEKYYASWPK.

7–14 (GIDASGKS) contributes to the ATP binding site.

The protein belongs to the thymidylate kinase family.

It carries out the reaction dTMP + ATP = dTDP + ADP. Functionally, phosphorylation of dTMP to form dTDP in both de novo and salvage pathways of dTTP synthesis. The polypeptide is Thymidylate kinase (Mesomycoplasma hyopneumoniae (strain 7448) (Mycoplasma hyopneumoniae)).